The sequence spans 316 residues: tRNA dimethylallyltransferase (316 aa).

Position 17–24 (17–24 (GPTASGKT)) interacts with ATP. 19–24 (TASGKT) is a substrate binding site. Interaction with substrate tRNA regions lie at residues 42 to 45 (DSAL), 166 to 170 (QRLSR), and 247 to 252 (RCVGYR).

It belongs to the IPP transferase family. In terms of assembly, monomer. Requires Mg(2+) as cofactor.

The enzyme catalyses adenosine(37) in tRNA + dimethylallyl diphosphate = N(6)-dimethylallyladenosine(37) in tRNA + diphosphate. Functionally, catalyzes the transfer of a dimethylallyl group onto the adenine at position 37 in tRNAs that read codons beginning with uridine, leading to the formation of N6-(dimethylallyl)adenosine (i(6)A). This Salmonella paratyphi C (strain RKS4594) protein is tRNA dimethylallyltransferase.